We begin with the raw amino-acid sequence, 93 residues long: Small ribosomal subunit protein uS19 (93 aa).

The protein belongs to the universal ribosomal protein uS19 family.

In terms of biological role, protein S19 forms a complex with S13 that binds strongly to the 16S ribosomal RNA. The polypeptide is Small ribosomal subunit protein uS19 (Mycobacterium sp. (strain JLS)).